We begin with the raw amino-acid sequence, 292 residues long: 2-(5''-triphosphoribosyl)-3'-dephosphocoenzyme-A synthase (292 aa).

This sequence belongs to the CitG/MdcB family.

It catalyses the reaction 3'-dephospho-CoA + ATP = 2'-(5''-triphospho-alpha-D-ribosyl)-3'-dephospho-CoA + adenine. Catalyzes the formation of 2-(5''-triphosphoribosyl)-3'-dephosphocoenzyme-A, the precursor of the prosthetic group of the holo-acyl carrier protein (gamma chain) of citrate lyase, from ATP and dephospho-CoA. The protein is 2-(5''-triphosphoribosyl)-3'-dephosphocoenzyme-A synthase of Escherichia coli O17:K52:H18 (strain UMN026 / ExPEC).